Consider the following 693-residue polypeptide: Elongation factor G (693 aa).

Positions 8 to 282 (EKTRNIGIMA…AVIDYLPSPL (275 aa)) constitute a tr-type G domain. Residues 17-24 (AHVDAGKT), 81-85 (DTPGH), and 135-138 (NKMD) contribute to the GTP site.

The protein belongs to the TRAFAC class translation factor GTPase superfamily. Classic translation factor GTPase family. EF-G/EF-2 subfamily.

The protein resides in the cytoplasm. Its function is as follows. Catalyzes the GTP-dependent ribosomal translocation step during translation elongation. During this step, the ribosome changes from the pre-translocational (PRE) to the post-translocational (POST) state as the newly formed A-site-bound peptidyl-tRNA and P-site-bound deacylated tRNA move to the P and E sites, respectively. Catalyzes the coordinated movement of the two tRNA molecules, the mRNA and conformational changes in the ribosome. In Streptococcus gordonii (strain Challis / ATCC 35105 / BCRC 15272 / CH1 / DL1 / V288), this protein is Elongation factor G.